We begin with the raw amino-acid sequence, 364 residues long: WAT1-related protein At5g47470 (364 aa).

A run of 10 helical transmembrane segments spans residues Met28–Met48, Phe59–Leu79, Leu93–Leu113, Ala124–Leu144, Ile158–Ser178, Val197–Gln217, Ile228–Leu248, Val255–Ala275, Pro293–Leu313, and Val319–Trp339. One can recognise an EamA 1 domain in the interval Val40–Ser172. The 120-residue stretch at Ser219–Leu338 folds into the EamA 2 domain.

Belongs to the drug/metabolite transporter (DMT) superfamily. Plant drug/metabolite exporter (P-DME) (TC 2.A.7.4) family.

The protein localises to the membrane. In Arabidopsis thaliana (Mouse-ear cress), this protein is WAT1-related protein At5g47470.